A 148-amino-acid chain; its full sequence is Small ribosomal subunit protein eS19 (148 aa).

Positions 79-90 (HGSTKNRGSRPA) are enriched in basic residues. Disordered stretches follow at residues 79-98 (HGST…ASGA) and 116-148 (DEEK…EDDE). A compositionally biased stretch (basic and acidic residues) spans 130–140 (RDLDRIAKTTV).

Belongs to the eukaryotic ribosomal protein eS19 family.

The protein is Small ribosomal subunit protein eS19 (rps19) of Emericella nidulans (strain FGSC A4 / ATCC 38163 / CBS 112.46 / NRRL 194 / M139) (Aspergillus nidulans).